Reading from the N-terminus, the 186-residue chain is Transcriptional repressor NrdR (186 aa).

The segment at Cys3–Cys34 is a zinc-finger region. The ATP-cone domain maps to Leu46–Asp136. The interval Ala149–Ala169 is disordered.

It belongs to the NrdR family. Requires Zn(2+) as cofactor.

In terms of biological role, negatively regulates transcription of bacterial ribonucleotide reductase nrd genes and operons by binding to NrdR-boxes. This Parafrankia sp. (strain EAN1pec) protein is Transcriptional repressor NrdR.